The sequence spans 158 residues: UPF0260 protein RL1394 (158 aa).

Belongs to the UPF0260 family.

The chain is UPF0260 protein RL1394 from Rhizobium johnstonii (strain DSM 114642 / LMG 32736 / 3841) (Rhizobium leguminosarum bv. viciae).